The chain runs to 987 residues: UPF0182 protein DIP0733 (987 aa).

Transmembrane regions (helical) follow at residues 19–39 (LTWL…VVDL), 63–83 (IGLF…AGWF), 115–135 (FLVV…QQAW), 176–196 (SVLL…LGGI), 212–234 (YAKV…SYWL), 261–281 (AKIV…SVIV), and 290–310 (ISTV…PIMM). Residues 904 to 927 (DLGEAKGLKPESQNRDKPEDKEGK) are compositionally biased toward basic and acidic residues. Positions 904–950 (DLGEAKGLKPESQNRDKPEDKEGKAPSTPSAPASGSGTTGEAIGKIN) are disordered. Over residues 928-943 (APSTPSAPASGSGTTG) the composition is skewed to low complexity.

It belongs to the UPF0182 family.

Its subcellular location is the cell membrane. This is UPF0182 protein DIP0733 from Corynebacterium diphtheriae (strain ATCC 700971 / NCTC 13129 / Biotype gravis).